Consider the following 388-residue polypeptide: FBD-associated F-box protein At5g60610 (388 aa).

Residues 1-47 (MDRISGLPDELLVKIISFVPTKVAVSTSILSKRWESLWKWVPKLECD) enclose the F-box domain. The region spanning 337–388 (NWKNIQRSVPKCLKSSLKTLEFAGYTARPEERDFLSFIFKKARCLKTSSISH) is the FBD domain.

The polypeptide is FBD-associated F-box protein At5g60610 (Arabidopsis thaliana (Mouse-ear cress)).